Consider the following 1605-residue polypeptide: GTPase-activating protein pac-1 (1605 aa).

A required for localization to adherens junctions region spans residues 1-574 (MEEHHRRLHV…QRFIALFNSS (574 aa)). 3 disordered regions span residues 293 to 430 (QRHP…ISTS), 529 to 556 (MRSG…LNAP), and 574 to 593 (SKTS…RSRT). Residues 323 to 334 (SKEDPSEDTGHD) show a composition bias toward basic and acidic residues. Composition is skewed to low complexity over residues 353–365 (RNAS…SSRS), 420–430 (TTSSTSSISTS), and 530–552 (RSGG…TSRS). Positions 599 to 726 (RFALPGTILQ…WISVLQSSSE (128 aa)) constitute a PH domain. 2 stretches are compositionally biased toward polar residues: residues 728 to 745 (GIAT…TTGR) and 846 to 855 (KNSQLQSPTA). Disordered regions lie at residues 728–752 (GIAT…NAVS) and 846–942 (KNSQ…AGAP). Positions 868-879 (SSSQTMATTSSS) are enriched in low complexity. Basic residues predominate over residues 908–917 (SGRKWKKSKA). Residues 928 to 941 (GSSSGSQQQGAAGA) show a composition bias toward low complexity. Residues 948-1146 (VRIADCPTGS…TLIHYNLWMF (199 aa)) enclose the Rho-GAP domain. Disordered stretches follow at residues 1152-1176 (TEDA…YGVG), 1207-1258 (EGKG…AASV), 1277-1339 (SRQT…RRKR), 1438-1533 (TSDY…ARRH), and 1554-1605 (GIRK…DELL). Positions 1211 to 1229 (QKIKNMLRRNSRRDKSKSK) are enriched in basic residues. 2 stretches are compositionally biased toward polar residues: residues 1244–1257 (GWTQ…SAAS) and 1278–1300 (RQTV…RLDQ). Over residues 1301–1312 (SPSLESSLGSLP) the composition is skewed to low complexity. Over residues 1438–1453 (TSDYSTTSSAPLSTNP) the composition is skewed to polar residues. Positions 1461-1476 (DQPNSSSDYASSDPSP) are enriched in low complexity. Polar residues-rich tracts occupy residues 1480 to 1493 (NPST…SNLA) and 1500 to 1515 (HATS…MSRS). Positions 1558-1575 (SSPDVSRDEVSDDEKNHQ) are enriched in basic and acidic residues.

Associated with the catenin-cadherin complex consisting of hmr-1, hmp-1 and hmp-2; this is mediated by interaction with picc-1.

The protein resides in the cytoplasm. It localises to the cell junction. Its subcellular location is the adherens junction. GTPase-activating protein for members of the Rho subfamily including Rac1, RhoA and cdc42 and other Ras-related subfamilies including let-60. Mediates radial (inner-outer) polarity and gastrulation by excluding par-6 from contacted cell surfaces; acts by inactivating cdc42 at inner cell surfaces which limits active cdc42 to outer cell surfaces devoid of cell-cell contacts, where cdc42 can bind and recruit par-6. Required for blastomere polarization. The protein is GTPase-activating protein pac-1 (pac-1) of Caenorhabditis elegans.